Consider the following 270-residue polypeptide: Elongation factor Ts (270 aa).

The segment at 75 to 78 (TDFV) is involved in Mg(2+) ion dislocation from EF-Tu.

This sequence belongs to the EF-Ts family.

It is found in the cytoplasm. Its function is as follows. Associates with the EF-Tu.GDP complex and induces the exchange of GDP to GTP. It remains bound to the aminoacyl-tRNA.EF-Tu.GTP complex up to the GTP hydrolysis stage on the ribosome. The sequence is that of Elongation factor Ts from Cutibacterium acnes (strain DSM 16379 / KPA171202) (Propionibacterium acnes).